The primary structure comprises 338 residues: ATP synthase subunit a (338 aa).

Residues 15–35 (IAVLVMPLLLGFGAPIYAAAE) traverse the membrane as a helical segment. The segment at 45–66 (AAAVHTDEAHGEAGEHAEGGHG) is disordered. Residues 49–65 (HTDEAHGEAGEHAEGGH) show a composition bias toward basic and acidic residues. A run of 7 helical transmembrane segments spans residues 109–129 (HVVFMWLAALILLLVFGYVGN), 174–194 (LLTVFVFILVLNLLGLIPYGA), 199–219 (NINVTLTLSVFTFFITQVSAI), 238–258 (ALWIIMIPIEVIGLFTKPFAL), 262–282 (LFANMTAGHIIILSLIFISFI), 287–307 (IVAIFVSVPFSIFIYLLEIFV), and 308–328 (SFLQAFIFTMLSALFIGLGSA).

This sequence belongs to the ATPase A chain family. In terms of assembly, F-type ATPases have 2 components, CF(1) - the catalytic core - and CF(0) - the membrane proton channel. CF(1) has five subunits: alpha(3), beta(3), gamma(1), delta(1), epsilon(1). CF(0) has four main subunits: a, b, b' and c.

It is found in the cell inner membrane. Key component of the proton channel; it plays a direct role in the translocation of protons across the membrane. The polypeptide is ATP synthase subunit a (Chlorobium phaeobacteroides (strain BS1)).